A 67-amino-acid polypeptide reads, in one-letter code: DNA-directed RNA polymerase subunit omega (67 aa).

It belongs to the RNA polymerase subunit omega family. In terms of assembly, the RNAP catalytic core consists of 2 alpha, 1 beta, 1 beta' and 1 omega subunit. When a sigma factor is associated with the core the holoenzyme is formed, which can initiate transcription.

The enzyme catalyses RNA(n) + a ribonucleoside 5'-triphosphate = RNA(n+1) + diphosphate. Functionally, promotes RNA polymerase assembly. Latches the N- and C-terminal regions of the beta' subunit thereby facilitating its interaction with the beta and alpha subunits. In Burkholderia ambifaria (strain MC40-6), this protein is DNA-directed RNA polymerase subunit omega.